We begin with the raw amino-acid sequence, 1200 residues long: Chromosome partition protein Smc (1200 aa).

32–39 (PNGCGKSN) is an ATP binding site. 2 coiled-coil regions span residues 171-219 (VTKY…AEKY) and 252-342 (LENL…MSEA). The region spanning 528-644 (QGIFGLVADV…QDVATARAWT (117 aa)) is the SMC hinge domain. Coiled-coil stretches lie at residues 679 to 706 (ALQK…ILTR) and 735 to 762 (LASQ…LEVE). The disordered stretch occupies residues 763–795 (EGQLTQSHQALEHEEEASRGEVAHGQADREGRE). Over residues 772–795 (ALEHEEEASRGEVAHGQADREGRE) the composition is skewed to basic and acidic residues. A coiled-coil region spans residues 1002–1039 (HAELSKRYDFLTAQKKDLQSSIEQLKEAIQRIDATSRE).

This sequence belongs to the SMC family. As to quaternary structure, homodimer. Probably forms the Structural Maintenance of Chromosome (SMC) condensin-like complex with ScpA and ScpB.

Its subcellular location is the cytoplasm. A conditionally essential component of the chromosome segregation machinery. Required for chromosome condensation and partitioning. Important for positioning of ParB-parS complexes (ori of replication) and of the ter replication site, as well as for segration of the ParB-parS complex and thus chromosome segregation. May act via the formation of a condensin-like complex containing Smc, ScpA and ScpB that pulls DNA away from mid-cell into both cell halves. This chain is Chromosome partition protein Smc, found in Myxococcus xanthus (strain DK1622).